Here is a 49-residue protein sequence, read N- to C-terminus: Large ribosomal subunit protein bL33D (49 aa).

The protein belongs to the bacterial ribosomal protein bL33 family.

The chain is Large ribosomal subunit protein bL33D (rpmG4) from Enterococcus faecalis (strain ATCC 700802 / V583).